The following is a 579-amino-acid chain: O-fucosyltransferase 24 (579 aa).

Residues Leu58–Cys78 traverse the membrane as a helical; Signal-anchor for type II membrane protein segment. N-linked (GlcNAc...) asparagine glycosylation is present at Asn133. A substrate-binding site is contributed by His355–Arg357. Asn528, Asn573, and Asn576 each carry an N-linked (GlcNAc...) asparagine glycan.

The protein belongs to the glycosyltransferase GT106 family.

It localises to the membrane. It participates in glycan metabolism. The protein is O-fucosyltransferase 24 of Arabidopsis thaliana (Mouse-ear cress).